The sequence spans 906 residues: DNA mismatch repair protein MutS (906 aa).

Position 656 to 663 (656 to 663) interacts with ATP; that stretch reads GPNMAGKS.

Belongs to the DNA mismatch repair MutS family.

In terms of biological role, this protein is involved in the repair of mismatches in DNA. It is possible that it carries out the mismatch recognition step. This protein has a weak ATPase activity. This chain is DNA mismatch repair protein MutS, found in Rhodopseudomonas palustris (strain BisA53).